Consider the following 65-residue polypeptide: Gene 51 protein (65 aa).

This Mycobacterium phage D29 (Mycobacteriophage D29) protein is Gene 51 protein (51).